The sequence spans 713 residues: Calpastatin (713 aa).

Residues 1 to 21 (MSRPGPKPAASSRPRRGAAAS) are compositionally biased toward low complexity. The interval 1–152 (MSRPGPKPAA…SADGESVAGG (152 aa)) is disordered. Positions 47–64 (VTASSAATGTSPRMSTTG) are enriched in polar residues. Ser-57 carries the phosphoserine modification. Lys-69 participates in a covalent cross-link: Glycyl lysine isopeptide (Lys-Gly) (interchain with G-Cter in SUMO2). The residue at position 86 (Lys-86) is an N6-acetyllysine. Residues 120–129 (SRSNEQIVSE) are compositionally biased toward polar residues. 2 positions are modified to phosphoserine: Ser-122 and Ser-171. Phosphothreonine is present on Thr-173. The Inhibitory domain 1 repeat unit spans residues 208 to 260 (TNKDDPPYTGPVVLDPMDSTYLEALGIKEGTIPPEYRKLLEKNEAITGPLPDS). The tract at residues 253–402 (ITGPLPDSPK…PEETSKCLSE (150 aa)) is disordered. 2 positions are modified to phosphoserine: Ser-260 and Ser-281. 3 stretches are compositionally biased toward polar residues: residues 275–285 (SDFTCSSPTGK), 294–304 (GESSKAQSAGV), and 326–346 (QALQ…QSHL). An Inhibitory domain 2 repeat occupies 341 to 393 (DPQSHLRQAKQVKEAKAKEERQEKCGEDEDTVPAEYRLKPAKDKDGKPLLPEP). Basic and acidic residues-rich tracts occupy residues 351–365 (QVKE…QEKC) and 376–387 (YRLKPAKDKDGK). 4 positions are modified to phosphoserine: Ser-401, Ser-403, Ser-410, and Ser-445. The interval 442–507 (LARSLGTRKE…PLLPKEAEEQ (66 aa)) is disordered. Residues 448–505 (TRKEDPEDEKSLVDKVKEKAKEEDHEKLGEKEETIPPDYRLEIVKDKDGKPLLPKEAE) are compositionally biased toward basic and acidic residues. The stretch at 451-504 (EDPEDEKSLVDKVKEKAKEEDHEKLGEKEETIPPDYRLEIVKDKDGKPLLPKEA) is one Inhibitory domain 3 repeat. Residues Ser-521 and Ser-532 each carry the phosphoserine modification. Positions 544-558 (VSETVSQVPAPSNHT) are enriched in polar residues. The segment at 544–713 (VSETVSQVPA…PKPKVDEDAT (170 aa)) is disordered. Phosphoserine occurs at positions 580 and 582. An Inhibitory domain 4 repeat occupies 588–641 (PDPDENKPLDDKVKEKIKAEHSEKLGERDDTIPPEYRHLLDNDGKDKPEKPLTK). Composition is skewed to basic and acidic residues over residues 588-648 (PDPD…KLGQ) and 687-713 (SKNE…EDAT).

It belongs to the protease inhibitor I27 (calpastatin) family.

In terms of biological role, specific inhibition of calpain (calcium-dependent cysteine protease). Plays a key role in postmortem tenderization of meat and have been proposed to be involved in muscle protein degradation in living tissue. This is Calpastatin (Cast) from Rattus norvegicus (Rat).